The chain runs to 106 residues: ATP-dependent Clp protease adapter protein ClpS (106 aa).

Belongs to the ClpS family. Binds to the N-terminal domain of the chaperone ClpA.

Its function is as follows. Involved in the modulation of the specificity of the ClpAP-mediated ATP-dependent protein degradation. In Escherichia fergusonii (strain ATCC 35469 / DSM 13698 / CCUG 18766 / IAM 14443 / JCM 21226 / LMG 7866 / NBRC 102419 / NCTC 12128 / CDC 0568-73), this protein is ATP-dependent Clp protease adapter protein ClpS.